The sequence spans 179 residues: Large ribosomal subunit protein uL5 (179 aa).

Belongs to the universal ribosomal protein uL5 family. As to quaternary structure, part of the 50S ribosomal subunit; part of the 5S rRNA/L5/L18/L25 subcomplex. Contacts the 5S rRNA and the P site tRNA. Forms a bridge to the 30S subunit in the 70S ribosome.

Functionally, this is one of the proteins that bind and probably mediate the attachment of the 5S RNA into the large ribosomal subunit, where it forms part of the central protuberance. In the 70S ribosome it contacts protein S13 of the 30S subunit (bridge B1b), connecting the 2 subunits; this bridge is implicated in subunit movement. Contacts the P site tRNA; the 5S rRNA and some of its associated proteins might help stabilize positioning of ribosome-bound tRNAs. The sequence is that of Large ribosomal subunit protein uL5 from Alkalilimnicola ehrlichii (strain ATCC BAA-1101 / DSM 17681 / MLHE-1).